The chain runs to 205 residues: Large ribosomal subunit protein uL4 (205 aa).

The protein belongs to the universal ribosomal protein uL4 family. As to quaternary structure, part of the 50S ribosomal subunit.

Its function is as follows. One of the primary rRNA binding proteins, this protein initially binds near the 5'-end of the 23S rRNA. It is important during the early stages of 50S assembly. It makes multiple contacts with different domains of the 23S rRNA in the assembled 50S subunit and ribosome. Forms part of the polypeptide exit tunnel. This is Large ribosomal subunit protein uL4 from Ruegeria sp. (strain TM1040) (Silicibacter sp.).